Reading from the N-terminus, the 203-residue chain is Nucleoside triphosphate pyrophosphatase (203 aa).

Asp-78 acts as the Proton acceptor in catalysis.

It belongs to the Maf family. A divalent metal cation is required as a cofactor.

The protein resides in the cytoplasm. The catalysed reaction is a ribonucleoside 5'-triphosphate + H2O = a ribonucleoside 5'-phosphate + diphosphate + H(+). It carries out the reaction a 2'-deoxyribonucleoside 5'-triphosphate + H2O = a 2'-deoxyribonucleoside 5'-phosphate + diphosphate + H(+). Nucleoside triphosphate pyrophosphatase. May have a dual role in cell division arrest and in preventing the incorporation of modified nucleotides into cellular nucleic acids. The polypeptide is Nucleoside triphosphate pyrophosphatase (Prochlorococcus marinus (strain AS9601)).